Reading from the N-terminus, the 268-residue chain is Tryptophan synthase alpha chain (268 aa).

Catalysis depends on proton acceptor residues E49 and D60.

It belongs to the TrpA family. Tetramer of two alpha and two beta chains.

The enzyme catalyses (1S,2R)-1-C-(indol-3-yl)glycerol 3-phosphate + L-serine = D-glyceraldehyde 3-phosphate + L-tryptophan + H2O. It participates in amino-acid biosynthesis; L-tryptophan biosynthesis; L-tryptophan from chorismate: step 5/5. In terms of biological role, the alpha subunit is responsible for the aldol cleavage of indoleglycerol phosphate to indole and glyceraldehyde 3-phosphate. The polypeptide is Tryptophan synthase alpha chain (Haemophilus influenzae (strain 86-028NP)).